Consider the following 162-residue polypeptide: MEKIFERLMYASRWIMAPIYLGLSLVLLGLGIKFFQEIFHVLPIIFEMREVDLVLVTLSLIDITLVGGLIVMVMFSGYENFVSQLDVGEDSEKLSWLGKLDSGSLKNKVAASIVAISSIHLLKIFMNVENISNDKIMWYLLIHITFVLSAFAMGYLDKITRK.

A run of 3 helical transmembrane segments spans residues 15–35, 53–73, and 136–156; these read IMAPIYLGLSLVLLGLGIKFF, LVLVTLSLIDITLVGGLIVMV, and IMWYLLIHITFVLSAFAMGYL.

It belongs to the UPF0114 family.

It is found in the cell membrane. The sequence is that of UPF0114 protein Sputw3181_3501 from Shewanella sp. (strain W3-18-1).